A 275-amino-acid chain; its full sequence is Small ribosomal subunit protein uS3 (275 aa).

Positions 38–106 (IRRMMTSGME…QVQLNILEVK (69 aa)) constitute a KH type-2 domain. Low complexity predominate over residues 216–228 (NAAARAGNRPARG). Positions 216-275 (NAAARAGNRPARGGADRPARGGRGGERGGRGRKPQQAPAAEAPKAEAPAAAPAESTGTEA) are disordered. Residues 229-244 (GADRPARGGRGGERGG) show a composition bias toward basic and acidic residues. A compositionally biased stretch (low complexity) spans 249–268 (PQQAPAAEAPKAEAPAAAPA).

The protein belongs to the universal ribosomal protein uS3 family. Part of the 30S ribosomal subunit. Forms a tight complex with proteins S10 and S14.

Its function is as follows. Binds the lower part of the 30S subunit head. Binds mRNA in the 70S ribosome, positioning it for translation. In Streptomyces avermitilis (strain ATCC 31267 / DSM 46492 / JCM 5070 / NBRC 14893 / NCIMB 12804 / NRRL 8165 / MA-4680), this protein is Small ribosomal subunit protein uS3.